The sequence spans 120 residues: Natriuretic peptide (120 aa).

Positions 1-25 are cleaved as a signal peptide; that stretch reads MVGLSRLADGGLLLVLALLPLALDG. Positions 26 to 70 are excised as a propeptide; sequence KPAPLEKAPMAPARIIPYLRPVGKESRAALDRMVPPEDGDSRRLE. Cys-81 and Cys-97 are joined by a disulfide. Positions 110-120 are excised as a propeptide; the sequence is ILPYLRPIRKE.

It belongs to the natriuretic peptide family. As to expression, expressed by the venom gland.

It localises to the secreted. Its function is as follows. Natriuretic peptide that dose-dependently induces the rapid relaxation of rat aortic strips phenylephrine-precontracted. Acts by stimulating cGMP production in a dose-dependent manner (by probably activating NPR1 and/or NPR2). May also show potent hypotensive effects. This is Natriuretic peptide from Micrurus altirostris (Uruguayan coral snake).